Reading from the N-terminus, the 391-residue chain is 4-hydroxy-3-methylbut-2-en-1-yl diphosphate synthase (flavodoxin) (391 aa).

Residues Cys281, Cys284, Cys316, and Glu323 each contribute to the [4Fe-4S] cluster site. The interval 372–391 (EMGGEDGQGGIKGSPVVSVS) is disordered.

It belongs to the IspG family. The cofactor is [4Fe-4S] cluster.

It carries out the reaction (2E)-4-hydroxy-3-methylbut-2-enyl diphosphate + oxidized [flavodoxin] + H2O + 2 H(+) = 2-C-methyl-D-erythritol 2,4-cyclic diphosphate + reduced [flavodoxin]. Its pathway is isoprenoid biosynthesis; isopentenyl diphosphate biosynthesis via DXP pathway; isopentenyl diphosphate from 1-deoxy-D-xylulose 5-phosphate: step 5/6. In terms of biological role, converts 2C-methyl-D-erythritol 2,4-cyclodiphosphate (ME-2,4cPP) into 1-hydroxy-2-methyl-2-(E)-butenyl 4-diphosphate. The sequence is that of 4-hydroxy-3-methylbut-2-en-1-yl diphosphate synthase (flavodoxin) from Renibacterium salmoninarum (strain ATCC 33209 / DSM 20767 / JCM 11484 / NBRC 15589 / NCIMB 2235).